We begin with the raw amino-acid sequence, 112 residues long: Macrodomain Ori protein (112 aa).

Residues 91–112 are disordered; it reads FHTLSGGKPQVEGAEDYTEADD. The span at 103–112 shows a compositional bias: acidic residues; the sequence is GAEDYTEADD.

The protein belongs to the MaoP family.

Functionally, involved in the organization of the Ori region of the chromosome into a macrodomain (MD). It constrains DNA mobility in the Ori macrodomain and limits long-distance DNA interactions with other chromosomal regions. In Salmonella choleraesuis (strain SC-B67), this protein is Macrodomain Ori protein.